A 284-amino-acid polypeptide reads, in one-letter code: NADH-cytochrome b5 reductase 1 (284 aa).

A helical transmembrane segment spans residues 7–27 (KLVVVIVIVVVPLLFKFIIGP). The region spanning 38-142 (NDFQSFPLVE…KGPRGNYHYE (105 aa)) is the FAD-binding FR-type domain. Residues 122 to 137 (GELK…GPRG) and 148 to 180 (HLGM…KVSL) contribute to the FAD site.

Belongs to the flavoprotein pyridine nucleotide cytochrome reductase family. Monomer. Component of the 2-(3-amino-3-carboxypropyl)histidine synthase complex composed of DPH1, DPH2, KTI11/DPH3 and a NADH-dependent reductase, predominantly CBR1. Interacts with KTI11/DPH3. Interacts with STE20. FAD is required as a cofactor.

It localises to the mitochondrion outer membrane. The enzyme catalyses 2 Fe(III)-[cytochrome b5] + NADH = 2 Fe(II)-[cytochrome b5] + NAD(+) + H(+). The catalysed reaction is 2 Fe(3+)-[Dph3] + NADH = 2 Fe(2+)-[Dph3] + NAD(+) + H(+). It participates in protein modification; peptidyl-diphthamide biosynthesis. With respect to regulation, competitively inhibited by NAD(+). Inhibited by mercurials such as p-chloromercuribenzoate (PCMB) and HgCl(2). Enzymatic activity increases under anaerobic conditions. Its function is as follows. NADH-dependent reductase for KTI11/DPH3 and cytochrome b5. Required for the first step of diphthamide biosynthesis, a post-translational modification of histidine which occurs in elongation factor 2. DPH1 and DPH2 transfer a 3-amino-3-carboxypropyl (ACP) group from S-adenosyl-L-methionine (SAM) to a histidine residue, the reaction is assisted by a reduction system comprising KTI11/DPH3 and a NADH-dependent reductase, predominantly CBR1. By reducing KTI11/DPH3, also involved in the formation of the tRNA wobble base modification mcm5s 2U (5-methoxycarbonylmethyl-2-thiouridine), mediated by the elongator complex. The cytochrome b5/NADH cytochrome b5 reductase electron transfer system supports the catalytic activity of several sterol biosynthetic enzymes. Plays a role in bud morphology. The chain is NADH-cytochrome b5 reductase 1 (CBR1) from Saccharomyces cerevisiae (strain ATCC 204508 / S288c) (Baker's yeast).